A 185-amino-acid polypeptide reads, in one-letter code: Large ribosomal subunit protein eL19 (185 aa).

Residues Ser152–Val185 form a disordered region.

It belongs to the eukaryotic ribosomal protein eL19 family.

The protein is Large ribosomal subunit protein eL19 (RPL19) of Tetrahymena thermophila (strain SB210).